A 298-amino-acid polypeptide reads, in one-letter code: TLR adapter interacting with SLC15A4 on the lysosome (298 aa).

Residues 287–291 (SLHIS) carry the pLxIS motif motif. Serine 291 carries the phosphoserine modification.

In terms of assembly, interacts (via pLxIS motif) with IRF5; leading to IRF5 activation. Interacts with SLC15A4; leading to its recruitment to endolysosome. In terms of processing, the phosphorylated pLxIS motif constitutes an IRF5-binding motif, leading to recruitment of the transcription factor IRF5 to induce type-I interferons and other cytokines.

The protein localises to the lysosome membrane. The protein resides in the endosome membrane. Its subcellular location is the nucleus. It localises to the cytoplasm. Functionally, innate immune adapter that mediates the recruitment and activation of IRF5 downstream of endolysosomal toll-like receptors TLR7, TLR8 and TLR9. Following recruitment to endolysosome by SLC15A4 downstream of TLR7, TLR8 and TLR9, specifically recruits IRF5 transcription factor via its pLxIS motif, leading to IRF5 activation and subsequent expression of type I interferons. Plays a role in the regulation of endolysosomal pH in immune cells such as B-cells, dendritic cells and monocytes. The protein is TLR adapter interacting with SLC15A4 on the lysosome of Mus musculus (Mouse).